Consider the following 120-residue polypeptide: MFLLYEYDIFWAFLIISSAIPVLAFLISGVLSPIRKGPEKLSSYESGIEPIGDAWLQFRIRYYMFALVFVVFDVETVFLYPWAMSFDVLGVSAFIEVFIFVLILILGLVYAWRKGALEWS.

3 helical membrane-spanning segments follow: residues 9-29 (IFWAFLIISSAIPVLAFLISG), 64-84 (MFALVFVVFDVETVFLYPWAM), and 88-108 (VLGVSAFIEVFIFVLILILGL).

The protein belongs to the complex I subunit 3 family. As to quaternary structure, NDH is composed of at least 16 different subunits, 5 of which are encoded in the nucleus.

The protein resides in the plastid. Its subcellular location is the chloroplast thylakoid membrane. The catalysed reaction is a plastoquinone + NADH + (n+1) H(+)(in) = a plastoquinol + NAD(+) + n H(+)(out). It catalyses the reaction a plastoquinone + NADPH + (n+1) H(+)(in) = a plastoquinol + NADP(+) + n H(+)(out). Its function is as follows. NDH shuttles electrons from NAD(P)H:plastoquinone, via FMN and iron-sulfur (Fe-S) centers, to quinones in the photosynthetic chain and possibly in a chloroplast respiratory chain. The immediate electron acceptor for the enzyme in this species is believed to be plastoquinone. Couples the redox reaction to proton translocation, and thus conserves the redox energy in a proton gradient. The protein is NAD(P)H-quinone oxidoreductase subunit 3, chloroplastic of Arabis hirsuta (Hairy rock-cress).